A 117-amino-acid chain; its full sequence is Gamma-aminobutyric acid receptor-associated protein-like 3 (117 aa).

Residues 1-22 (MKFQYKEVHPFEYRKKEGEKIR) form an interaction with beta-tubulin region. The segment at 36 to 68 (APKARVPDLDRRKYLVPSDLTDGQFYLLIRKRI) is interaction with GABRG2. Gly-116 is lipidated: Phosphatidylethanolamine amidated glycine. Residue Lys-117 is a propeptide, removed in mature form.

It belongs to the ATG8 family. Interacts with GABRG2 and beta-tubulin. In terms of processing, the precursor molecule is cleaved by ATG4B to form the cytosolic form, GABARAPL3-I. This is activated by APG7L/ATG7, transferred to ATG3 and conjugated to phospholipid to form the membrane-bound form, GABARAPL3-II. ATG4B also mediates the delipidation required for GABARAPL1 recycling when autophagosomes fuse with lysosomes. Ubiquitous. Expressed at very high levels in the brain, heart, peripheral blood leukocytes, liver, kidney, placenta and skeletal muscle. Expressed at very low levels in thymus and small intestine.

It localises to the cytoplasm. The protein localises to the cytoskeleton. The protein resides in the cytoplasmic vesicle. Its subcellular location is the autophagosome membrane. In terms of biological role, ubiquitin-like modifier involved in autophagosome formation. Whereas LC3s are involved in elongation of the phagophore membrane, the GABARAP/GATE-16 subfamily is essential for a later stage in autophagosome maturation. The polypeptide is Gamma-aminobutyric acid receptor-associated protein-like 3 (GABARAPL3) (Homo sapiens (Human)).